The chain runs to 250 residues: 5-oxoprolinase subunit A (250 aa).

It belongs to the LamB/PxpA family. In terms of assembly, forms a complex composed of PxpA, PxpB and PxpC.

It carries out the reaction 5-oxo-L-proline + ATP + 2 H2O = L-glutamate + ADP + phosphate + H(+). In terms of biological role, catalyzes the cleavage of 5-oxoproline to form L-glutamate coupled to the hydrolysis of ATP to ADP and inorganic phosphate. The polypeptide is 5-oxoprolinase subunit A (Paraburkholderia phytofirmans (strain DSM 17436 / LMG 22146 / PsJN) (Burkholderia phytofirmans)).